The following is a 103-amino-acid chain: MQNQRIRIRLKAFDYKLIDASTAEIVETAKRTGAQVRGPIPLPTRKERFTVLISPHVNKKARDQYEIRTHKRLIDIVEPTDKTVDALMRLDLAAGVDVQISLG.

This sequence belongs to the universal ribosomal protein uS10 family. In terms of assembly, part of the 30S ribosomal subunit.

In terms of biological role, involved in the binding of tRNA to the ribosomes. The chain is Small ribosomal subunit protein uS10 from Vibrio campbellii (strain ATCC BAA-1116).